Here is a 393-residue protein sequence, read N- to C-terminus: Chorismate synthase (393 aa).

Residues arginine 40 and arginine 46 each contribute to the NADP(+) site. FMN is bound by residues 135–137 (RAS), 257–258 (QA), glycine 301, 316–320 (KPIAT), and arginine 342. The tract at residues 280–306 (DEIDVGPDGIRRRSNRAGGVEGGMSTG) is disordered.

Belongs to the chorismate synthase family. Homotetramer. It depends on FMNH2 as a cofactor.

The catalysed reaction is 5-O-(1-carboxyvinyl)-3-phosphoshikimate = chorismate + phosphate. It functions in the pathway metabolic intermediate biosynthesis; chorismate biosynthesis; chorismate from D-erythrose 4-phosphate and phosphoenolpyruvate: step 7/7. In terms of biological role, catalyzes the anti-1,4-elimination of the C-3 phosphate and the C-6 proR hydrogen from 5-enolpyruvylshikimate-3-phosphate (EPSP) to yield chorismate, which is the branch point compound that serves as the starting substrate for the three terminal pathways of aromatic amino acid biosynthesis. This reaction introduces a second double bond into the aromatic ring system. In Thermobifida fusca (strain YX), this protein is Chorismate synthase.